A 291-amino-acid polypeptide reads, in one-letter code: Glycine--tRNA ligase alpha subunit (291 aa).

The protein belongs to the class-II aminoacyl-tRNA synthetase family. As to quaternary structure, tetramer of two alpha and two beta subunits.

It is found in the cytoplasm. The catalysed reaction is tRNA(Gly) + glycine + ATP = glycyl-tRNA(Gly) + AMP + diphosphate. This is Glycine--tRNA ligase alpha subunit from Geotalea uraniireducens (strain Rf4) (Geobacter uraniireducens).